We begin with the raw amino-acid sequence, 101 residues long: Small ribosomal subunit protein uS14A (101 aa).

Positions 28–57 (KDIIRSPSSAPEQRSTAQRALARQPRDASP) are disordered. Residues 33–45 (SPSSAPEQRSTAQ) show a composition bias toward polar residues.

The protein belongs to the universal ribosomal protein uS14 family. As to quaternary structure, part of the 30S ribosomal subunit. Contacts proteins S3 and S10.

In terms of biological role, binds 16S rRNA, required for the assembly of 30S particles and may also be responsible for determining the conformation of the 16S rRNA at the A site. The protein is Small ribosomal subunit protein uS14A of Mycobacterium bovis (strain ATCC BAA-935 / AF2122/97).